Consider the following 253-residue polypeptide: Flap endonuclease Xni (253 aa).

Aspartate 105 lines the Mg(2+) pocket. The 5'-3' exonuclease domain maps to glutamate 162 to asparagine 251. Positions 172, 181, 183, and 186 each coordinate K(+). The interval glycine 185–serine 190 is interaction with DNA.

Belongs to the Xni family. The cofactor is Mg(2+). Requires K(+) as cofactor.

Functionally, has flap endonuclease activity. During DNA replication, flap endonucleases cleave the 5'-overhanging flap structure that is generated by displacement synthesis when DNA polymerase encounters the 5'-end of a downstream Okazaki fragment. The polypeptide is Flap endonuclease Xni (Shewanella amazonensis (strain ATCC BAA-1098 / SB2B)).